Reading from the N-terminus, the 78-residue chain is Large ribosomal subunit protein uL29 (78 aa).

This sequence belongs to the universal ribosomal protein uL29 family.

In Rhodococcus opacus (strain B4), this protein is Large ribosomal subunit protein uL29.